The sequence spans 276 residues: MLLRFTKMHGLGNDFMVLDLVSQHAHVQPKHVKLWGDRNTGIGFDQLLIVEAPSSPDVDFRYRIFNADGSEVEQCGNGARCFARFVQDKRLTVKKSIRVETKGGIIELNIRPDGQVTVDMGPPRLAPAEIPFQAEREALSYEIEVNGQRVELAAVSMGNPHGVLRVENVDSAPVHSLGPQLEVHPRFPKKANIGFLQVLDPHHARLRVWERGVGETQACGTGACAAAVAGIRQGWLQSPVQIDLPGGRLHIEWAGPGQPVMMTGPAVRVYEGQVRL.

Residues asparagine 13, glutamine 46, and asparagine 66 each contribute to the substrate site. Cysteine 75 acts as the Proton donor in catalysis. Residues 76–77 (GN), asparagine 159, asparagine 192, and 210–211 (ER) each bind substrate. The active-site Proton acceptor is the cysteine 219. 220 to 221 (GT) is a substrate binding site.

It belongs to the diaminopimelate epimerase family. In terms of assembly, homodimer.

Its subcellular location is the cytoplasm. It catalyses the reaction (2S,6S)-2,6-diaminopimelate = meso-2,6-diaminopimelate. The protein operates within amino-acid biosynthesis; L-lysine biosynthesis via DAP pathway; DL-2,6-diaminopimelate from LL-2,6-diaminopimelate: step 1/1. Its function is as follows. Catalyzes the stereoinversion of LL-2,6-diaminopimelate (L,L-DAP) to meso-diaminopimelate (meso-DAP), a precursor of L-lysine and an essential component of the bacterial peptidoglycan. This is Diaminopimelate epimerase from Pseudomonas aeruginosa (strain LESB58).